The primary structure comprises 75 residues: Cruzioseptin-8 (75 aa).

An N-terminal signal peptide occupies residues 1–22 (MAFLKKCLFLVLFLGLVSLSIC). Positions 23–43 (EEEKREEENEEVQEDDDQSEE) are excised as a propeptide. A disordered region spans residues 25–44 (EKREEENEEVQEDDDQSEEK). A compositionally biased stretch (acidic residues) spans 30-41 (ENEEVQEDDDQS). Position 72 is a glutamine amide (Gln-72). The propeptide occupies 74-75 (EQ).

In terms of tissue distribution, expressed by the skin glands.

It localises to the secreted. Functionally, has antimicrobial activity. In Cruziohyla calcarifer (Splendid leaf frog), this protein is Cruzioseptin-8.